A 428-amino-acid polypeptide reads, in one-letter code: Cytochrome c biogenesis protein CcsB (428 aa).

Transmembrane regions (helical) follow at residues 14–34, 72–92, and 162–182; these read LRFA…GTFI, SFWF…CSFR, and IGPL…AYGS.

Belongs to the Ccs1/CcsB family. May interact with CcsA.

The protein resides in the cellular thylakoid membrane. Functionally, required during biogenesis of c-type cytochromes (cytochrome c6 and cytochrome f) at the step of heme attachment. In Prochlorococcus marinus (strain AS9601), this protein is Cytochrome c biogenesis protein CcsB.